A 342-amino-acid chain; its full sequence is Holliday junction branch migration complex subunit RuvB (342 aa).

Positions Met-1 to Tyr-179 are large ATPase domain (RuvB-L). ATP-binding positions include Ile-18, Arg-19, Gly-60, Lys-63, Thr-64, Thr-65, Glu-126–Phe-128, Arg-169, Tyr-179, and Arg-216. Position 64 (Thr-64) interacts with Mg(2+). The segment at Asn-180–Glu-250 is small ATPAse domain (RuvB-S). The head domain (RuvB-H) stretch occupies residues Arg-253–Glu-342. DNA-binding residues include Arg-289, Arg-308, and Arg-313.

Belongs to the RuvB family. As to quaternary structure, homohexamer. Forms an RuvA(8)-RuvB(12)-Holliday junction (HJ) complex. HJ DNA is sandwiched between 2 RuvA tetramers; dsDNA enters through RuvA and exits via RuvB. An RuvB hexamer assembles on each DNA strand where it exits the tetramer. Each RuvB hexamer is contacted by two RuvA subunits (via domain III) on 2 adjacent RuvB subunits; this complex drives branch migration. In the full resolvosome a probable DNA-RuvA(4)-RuvB(12)-RuvC(2) complex forms which resolves the HJ.

It localises to the cytoplasm. It catalyses the reaction ATP + H2O = ADP + phosphate + H(+). Its function is as follows. The RuvA-RuvB-RuvC complex processes Holliday junction (HJ) DNA during genetic recombination and DNA repair, while the RuvA-RuvB complex plays an important role in the rescue of blocked DNA replication forks via replication fork reversal (RFR). RuvA specifically binds to HJ cruciform DNA, conferring on it an open structure. The RuvB hexamer acts as an ATP-dependent pump, pulling dsDNA into and through the RuvAB complex. RuvB forms 2 homohexamers on either side of HJ DNA bound by 1 or 2 RuvA tetramers; 4 subunits per hexamer contact DNA at a time. Coordinated motions by a converter formed by DNA-disengaged RuvB subunits stimulates ATP hydrolysis and nucleotide exchange. Immobilization of the converter enables RuvB to convert the ATP-contained energy into a lever motion, pulling 2 nucleotides of DNA out of the RuvA tetramer per ATP hydrolyzed, thus driving DNA branch migration. The RuvB motors rotate together with the DNA substrate, which together with the progressing nucleotide cycle form the mechanistic basis for DNA recombination by continuous HJ branch migration. Branch migration allows RuvC to scan DNA until it finds its consensus sequence, where it cleaves and resolves cruciform DNA. The chain is Holliday junction branch migration complex subunit RuvB from Rickettsia conorii (strain ATCC VR-613 / Malish 7).